The primary structure comprises 187 residues: RNA 2',3'-cyclic phosphodiesterase (187 aa).

The active-site Proton donor is His-40. Short sequence motifs (HXTX) lie at residues 40 to 43 (HLTL) and 125 to 128 (HITI). Residue His-125 is the Proton acceptor of the active site.

This sequence belongs to the 2H phosphoesterase superfamily. ThpR family.

The enzyme catalyses a 3'-end 2',3'-cyclophospho-ribonucleotide-RNA + H2O = a 3'-end 2'-phospho-ribonucleotide-RNA + H(+). Functionally, hydrolyzes RNA 2',3'-cyclic phosphodiester to an RNA 2'-phosphomonoester. This Thermotoga maritima (strain ATCC 43589 / DSM 3109 / JCM 10099 / NBRC 100826 / MSB8) protein is RNA 2',3'-cyclic phosphodiesterase.